The following is a 443-amino-acid chain: D(2) dopamine receptor (443 aa).

The Extracellular portion of the chain corresponds to 1 to 37; it reads MDPLNLSWYDDDLERQNWSRPFNGSDGKADRPHYNYY. N5, N17, and N23 each carry an N-linked (GlcNAc...) asparagine glycan. The helical transmembrane segment at 38–60 threads the bilayer; sequence ATLLTLLIAVIVFGNVLVCMAVS. Over 61–70 the chain is Cytoplasmic; sequence REKALQTTTN. A helical membrane pass occupies residues 71-93; that stretch reads YLIVSLAVADLLVATLVMPWVVY. Topologically, residues 94–108 are extracellular; that stretch reads LEVVGEWKFSKIHCD. A disulfide bridge connects residues C107 and C182. Residues 109 to 130 traverse the membrane as a helical segment; that stretch reads IFVTLDVMMCTASILNLCAISI. Topologically, residues 131–151 are cytoplasmic; that stretch reads DRYTAVAMPMLYNTRYSSKRR. Residues 152–172 traverse the membrane as a helical segment; the sequence is VTVMIAIVWVLSFTISCPLLF. Residues 173–188 are Extracellular-facing; that stretch reads GLNNADQNECIIANPA. Residues 189-213 traverse the membrane as a helical segment; it reads FVVYSSIVSFYVPFIVTLLVYIKIY. The tract at residues 211–373 is interaction with PPP1R9B; sequence KIYIVLRRRR…SQQKEKKATQ (163 aa). Residues 214–373 are Cytoplasmic-facing; it reads IVLRRRRKRV…SQQKEKKATQ (160 aa). Residues 281 to 332 are disordered; that stretch reads MEMLSSTSPPERTRYSPIPPSHHQLTLPDPSHHGLHSTPDSPAKPEKNGHAK. The chain crosses the membrane as a helical span at residues 374-395; the sequence is MLAIVLGVFIICWLPFFITHIL. The Extracellular segment spans residues 396–409; the sequence is NIHCDCNIPPVLYS. A disulfide bridge connects residues C399 and C401. The chain crosses the membrane as a helical span at residues 410–431; sequence AFTWLGYVNSAVNPIIYTTFNI. At 432-443 the chain is on the cytoplasmic side; it reads EFRKAFLKILHC. Residue C443 is the site of S-palmitoyl cysteine attachment.

The protein belongs to the G-protein coupled receptor 1 family. In terms of assembly, forms homo- and heterooligomers with DRD4. The interaction with DRD4 may modulate agonist-induced downstream signaling. Interacts with CADPS and CADPS2. Interacts with GPRASP1, PPP1R9B and CLIC6. Interacts with ARRB2. Interacts with HTR2A. Interacts with DRD1. Interacts with KCNA2. Post-translationally, palmitoylated. Palmitoylation which is required for proper localization to the plasma membrane and stability of the receptor could be carried on by ZDHHC4, ZDHHC3 and ZDHHC8.

The protein localises to the cell membrane. Its subcellular location is the golgi apparatus membrane. Functionally, dopamine receptor whose activity is mediated by G proteins which inhibit adenylyl cyclase. Positively regulates postnatal regression of retinal hyaloid vessels via suppression of VEGFR2/KDR activity, downstream of OPN5. This Chlorocebus aethiops (Green monkey) protein is D(2) dopamine receptor (DRD2).